The following is a 515-amino-acid chain: Cytidine and dCMP deaminase domain-containing protein 1 (515 aa).

2 stretches are compositionally biased toward polar residues: residues 1–11 (MKEAGQMQNLE) and 18–27 (SVSTQTGSMT). Disordered regions lie at residues 1-27 (MKEA…GSMT) and 56-83 (RQKS…STDK). Residues 60 to 83 (QKNEEGKHGPLGDNEEMTRVSTDK) are compositionally biased toward basic and acidic residues. Residues 71–169 (GDNEEMTRVS…SLLTEASSSE (99 aa)) enclose the CMP/dCMP-type deaminase 1 domain. Zn(2+) is bound by residues H110, C135, and C138. A Nuclear export signal motif is present at residues 272 to 284 (NLRQNMKDLILLL). Residues 318–483 (EIARHCMVQA…LNPSEAYGLE (166 aa)) form the CMP/dCMP-type deaminase 2 domain. H399 is a binding site for Zn(2+). E401 serves as the catalytic Proton donor. Residues C427 and C430 each contribute to the Zn(2+) site. A disordered region spans residues 481–515 (GLEQNEPERRENGVLRPVPQKEEQHQDKKLRLGIH). The span at 486–515 (EPERRENGVLRPVPQKEEQHQDKKLRLGIH) shows a compositional bias: basic and acidic residues. Positions 489–511 (RRENGVLRPVPQKEEQHQDKKLR) match the Bipartite nuclear localization signal motif.

Belongs to the cytidine and deoxycytidylate deaminase family. Zn(2+) serves as cofactor.

The protein resides in the cytoplasm. Its subcellular location is the nucleus. The catalysed reaction is 2'-deoxycytidine + H2O + H(+) = 2'-deoxyuridine + NH4(+). It carries out the reaction cytidine + H2O + H(+) = uridine + NH4(+). Catalyzes the deamination of cytidine and deoxycytidine into uridine and deoxyuridine, respectively. May play an important role in testicular development and spermatogenesis. The polypeptide is Cytidine and dCMP deaminase domain-containing protein 1 (CDADC1) (Macaca fascicularis (Crab-eating macaque)).